Consider the following 318-residue polypeptide: Transaldolase (318 aa).

The Schiff-base intermediate with substrate role is filled by Lys132.

This sequence belongs to the transaldolase family. Type 1 subfamily. In terms of assembly, homodimer.

It localises to the cytoplasm. The catalysed reaction is D-sedoheptulose 7-phosphate + D-glyceraldehyde 3-phosphate = D-erythrose 4-phosphate + beta-D-fructose 6-phosphate. It functions in the pathway carbohydrate degradation; pentose phosphate pathway; D-glyceraldehyde 3-phosphate and beta-D-fructose 6-phosphate from D-ribose 5-phosphate and D-xylulose 5-phosphate (non-oxidative stage): step 2/3. Transaldolase is important for the balance of metabolites in the pentose-phosphate pathway. This chain is Transaldolase, found in Shewanella oneidensis (strain ATCC 700550 / JCM 31522 / CIP 106686 / LMG 19005 / NCIMB 14063 / MR-1).